Here is a 244-residue protein sequence, read N- to C-terminus: Phosphoadenosine 5'-phosphosulfate reductase (244 aa).

The active-site Nucleophile; cysteine thiosulfonate intermediate is the cysteine 239.

Belongs to the PAPS reductase family. CysH subfamily.

It localises to the cytoplasm. It carries out the reaction [thioredoxin]-disulfide + sulfite + adenosine 3',5'-bisphosphate + 2 H(+) = [thioredoxin]-dithiol + 3'-phosphoadenylyl sulfate. It participates in sulfur metabolism; hydrogen sulfide biosynthesis; sulfite from sulfate: step 3/3. Functionally, catalyzes the formation of sulfite from phosphoadenosine 5'-phosphosulfate (PAPS) using thioredoxin as an electron donor. This is Phosphoadenosine 5'-phosphosulfate reductase from Pectobacterium carotovorum subsp. carotovorum (strain PC1).